Consider the following 352-residue polypeptide: Methylthioribose-1-phosphate isomerase (352 aa).

Substrate is bound by residues Arg-55 to Ala-57, Arg-98, and Gln-201. Asp-242 (proton donor) is an active-site residue. Position 252–253 (Asn-252–Lys-253) interacts with substrate.

The protein belongs to the eIF-2B alpha/beta/delta subunits family. MtnA subfamily.

The enzyme catalyses 5-(methylsulfanyl)-alpha-D-ribose 1-phosphate = 5-(methylsulfanyl)-D-ribulose 1-phosphate. Its pathway is amino-acid biosynthesis; L-methionine biosynthesis via salvage pathway; L-methionine from S-methyl-5-thio-alpha-D-ribose 1-phosphate: step 1/6. Functionally, catalyzes the interconversion of methylthioribose-1-phosphate (MTR-1-P) into methylthioribulose-1-phosphate (MTRu-1-P). The chain is Methylthioribose-1-phosphate isomerase from Methylococcus capsulatus (strain ATCC 33009 / NCIMB 11132 / Bath).